Here is a 111-residue protein sequence, read N- to C-terminus: Cytochrome c (111 aa).

N-acetylalanine is present on Ala-1. Cys-22, Cys-25, and His-26 together coordinate heme c. The residue at position 80 (Lys-80) is an N6,N6,N6-trimethyllysine. Position 88 (Met-88) interacts with heme c. Lys-94 is modified (N6,N6,N6-trimethyllysine).

The protein belongs to the cytochrome c family. Binds 1 heme c group covalently per subunit.

The protein localises to the mitochondrion intermembrane space. Functionally, electron carrier protein. The oxidized form of the cytochrome c heme group can accept an electron from the heme group of the cytochrome c1 subunit of cytochrome reductase. Cytochrome c then transfers this electron to the cytochrome oxidase complex, the final protein carrier in the mitochondrial electron-transport chain. The sequence is that of Cytochrome c from Nigella damascena (Love-in-a-mist).